The following is a 275-amino-acid chain: Centromere protein V (275 aa).

2 stretches are compositionally biased toward low complexity: residues 1–10 and 17–51; these read MRRSRSSAAA and RSGA…QAGS. A disordered region spans residues 1–109; that stretch reads MRRSRSSAAA…ATPTSSASNL (109 aa). A phosphoserine mark is found at serine 18 and serine 21. Arginine 43 is subject to Omega-N-methylarginine. The span at 79-100 shows a compositional bias: pro residues; the sequence is GEPPPPELALLPPPPPPPPTPA. Threonine 98, threonine 101, and threonine 103 each carry phosphothreonine. The CENP-V/GFA domain occupies 148-260; it reads HTGGCHCGAV…TEEFNGSDWE (113 aa). Residues cysteine 152, cysteine 154, cysteine 172, cysteine 174, cysteine 177, cysteine 216, and cysteine 219 each contribute to the Zn(2+) site. The residue at position 257 (serine 257) is a Phosphoserine.

It belongs to the Gfa family. Zn(2+) serves as cofactor.

Its subcellular location is the chromosome. It localises to the centromere. It is found in the kinetochore. The protein resides in the nucleus. The protein localises to the cytoplasm. Its subcellular location is the cytoskeleton. It localises to the spindle. Required for distribution of pericentromeric heterochromatin in interphase nuclei and for centromere formation and organization, chromosome alignment and cytokinesis. The polypeptide is Centromere protein V (CENPV) (Homo sapiens (Human)).